Consider the following 347-residue polypeptide: N-acetyl-gamma-glutamyl-phosphate reductase (347 aa).

Cys-152 is a catalytic residue.

This sequence belongs to the NAGSA dehydrogenase family. Type 1 subfamily.

It localises to the cytoplasm. It catalyses the reaction N-acetyl-L-glutamate 5-semialdehyde + phosphate + NADP(+) = N-acetyl-L-glutamyl 5-phosphate + NADPH + H(+). It participates in amino-acid biosynthesis; L-arginine biosynthesis; N(2)-acetyl-L-ornithine from L-glutamate: step 3/4. Catalyzes the NADPH-dependent reduction of N-acetyl-5-glutamyl phosphate to yield N-acetyl-L-glutamate 5-semialdehyde. This chain is N-acetyl-gamma-glutamyl-phosphate reductase, found in Ehrlichia ruminantium (strain Gardel).